The following is a 188-amino-acid chain: dCTP deaminase (188 aa).

Residues 111–116 (KSTYAR), 135–137 (TLE), Q156, Y170, and Q180 each bind dCTP. The active-site Proton donor/acceptor is E137.

This sequence belongs to the dCTP deaminase family. As to quaternary structure, homotrimer.

It carries out the reaction dCTP + H2O + H(+) = dUTP + NH4(+). The protein operates within pyrimidine metabolism; dUMP biosynthesis; dUMP from dCTP (dUTP route): step 1/2. Functionally, catalyzes the deamination of dCTP to dUTP. The protein is dCTP deaminase of Herminiimonas arsenicoxydans.